The primary structure comprises 493 residues: Probable malate:quinone oxidoreductase (493 aa).

This sequence belongs to the MQO family. It depends on FAD as a cofactor.

It carries out the reaction (S)-malate + a quinone = a quinol + oxaloacetate. The protein operates within carbohydrate metabolism; tricarboxylic acid cycle; oxaloacetate from (S)-malate (quinone route): step 1/1. The polypeptide is Probable malate:quinone oxidoreductase (Lysinibacillus sphaericus (strain C3-41)).